The chain runs to 212 residues: uncharacterized protein (212 aa).

The first 20 residues, 1–20 (MKNLTIGAIFLIFFAVSAFA), serve as a signal peptide directing secretion.

The protein localises to the virion. This is an uncharacterized protein from Acanthamoeba polyphaga (Amoeba).